A 185-amino-acid chain; its full sequence is MLNEIFNKQKTQSEKSLEALKKDFTTLRTGKVNIHILDHITVDYYGTQTPLNQVATVLASDASTISITPWEKPLLKTIESAIAAANIGVNPNNDGESVKLFFPPMTREQREENVKQAKAMGEKAKVSIRNIRKDANDAVKKLEKDKAISEDEAKKAYDEVQKLTDTYTTKIDEGVKSKESELLKV.

The protein belongs to the RRF family.

It is found in the cytoplasm. Functionally, responsible for the release of ribosomes from messenger RNA at the termination of protein biosynthesis. May increase the efficiency of translation by recycling ribosomes from one round of translation to another. The polypeptide is Ribosome-recycling factor (Campylobacter jejuni subsp. jejuni serotype O:2 (strain ATCC 700819 / NCTC 11168)).